A 224-amino-acid polypeptide reads, in one-letter code: MPDCQNTNLPEIILASASPRRQQILREMGFTFSVCPSQAELHPDGSVAPAKFATLNAETKARDIARNTRQGLIIAADTVVVDTLGILGKPASPEEALNYLLRLGGKSHTVISGICLINTQNGQVRSGTCQSSLHMRPFTPAEAQRYVESGLPMDKAGAYGIQDREFEPVEKIEGCYLNVVGLPACTLVRLMKEMGFCPELHDNWQPEGDCTLCRIYRTGINQTC.

Catalysis depends on aspartate 77, which acts as the Proton acceptor.

The protein belongs to the Maf family. YhdE subfamily. A divalent metal cation serves as cofactor.

Its subcellular location is the cytoplasm. The enzyme catalyses dTTP + H2O = dTMP + diphosphate + H(+). It catalyses the reaction UTP + H2O = UMP + diphosphate + H(+). Nucleoside triphosphate pyrophosphatase that hydrolyzes dTTP and UTP. May have a dual role in cell division arrest and in preventing the incorporation of modified nucleotides into cellular nucleic acids. The chain is dTTP/UTP pyrophosphatase from Dehalococcoides mccartyi (strain ATCC BAA-2266 / KCTC 15142 / 195) (Dehalococcoides ethenogenes (strain 195)).